The chain runs to 756 residues: 5-methyltetrahydropteroyltriglutamate--homocysteine methyltransferase (756 aa).

5-methyltetrahydropteroyltri-L-glutamate contacts are provided by residues 16 to 19 (RELK) and Lys112. Residues 432–434 (IGS) and Glu485 contribute to the L-homocysteine site. Residues 432–434 (IGS) and Glu485 contribute to the L-methionine site. Residues 516–517 (RC) and Trp562 contribute to the 5-methyltetrahydropteroyltri-L-glutamate site. Residue Asp600 coordinates L-homocysteine. L-methionine is bound at residue Asp600. 5-methyltetrahydropteroyltri-L-glutamate is bound at residue Glu606. Residues His642, Cys644, and Glu666 each contribute to the Zn(2+) site. His695 (proton donor) is an active-site residue. Position 727 (Cys727) interacts with Zn(2+).

This sequence belongs to the vitamin-B12 independent methionine synthase family. Zn(2+) is required as a cofactor.

The catalysed reaction is 5-methyltetrahydropteroyltri-L-glutamate + L-homocysteine = tetrahydropteroyltri-L-glutamate + L-methionine. It participates in amino-acid biosynthesis; L-methionine biosynthesis via de novo pathway; L-methionine from L-homocysteine (MetE route): step 1/1. In terms of biological role, catalyzes the transfer of a methyl group from 5-methyltetrahydrofolate to homocysteine resulting in methionine formation. This is 5-methyltetrahydropteroyltriglutamate--homocysteine methyltransferase from Haemophilus influenzae (strain ATCC 51907 / DSM 11121 / KW20 / Rd).